The chain runs to 190 residues: Xanthine phosphoribosyltransferase (190 aa).

Xanthine-binding residues include Leu-20 and Asn-27. Residue 128–132 (ANGQA) coordinates 5-phospho-alpha-D-ribose 1-diphosphate. Lys-156 is a binding site for xanthine.

It belongs to the purine/pyrimidine phosphoribosyltransferase family. Xpt subfamily. Homodimer.

It is found in the cytoplasm. It carries out the reaction XMP + diphosphate = xanthine + 5-phospho-alpha-D-ribose 1-diphosphate. It functions in the pathway purine metabolism; XMP biosynthesis via salvage pathway; XMP from xanthine: step 1/1. Functionally, converts the preformed base xanthine, a product of nucleic acid breakdown, to xanthosine 5'-monophosphate (XMP), so it can be reused for RNA or DNA synthesis. The protein is Xanthine phosphoribosyltransferase of Pediococcus pentosaceus (strain ATCC 25745 / CCUG 21536 / LMG 10740 / 183-1w).